We begin with the raw amino-acid sequence, 235 residues long: Thiamine import ATP-binding protein ThiQ (235 aa).

The region spanning L2–I230 is the ABC transporter domain. Residue G32–S39 coordinates ATP.

It belongs to the ABC transporter superfamily. Thiamine importer (TC 3.A.1.19.1) family. As to quaternary structure, the complex is composed of two ATP-binding proteins (ThiQ), two transmembrane proteins (ThiP) and a solute-binding protein (ThiB).

The protein resides in the cell inner membrane. It catalyses the reaction thiamine(out) + ATP + H2O = thiamine(in) + ADP + phosphate + H(+). Functionally, part of the ABC transporter complex ThiBPQ involved in thiamine import. Responsible for energy coupling to the transport system. This is Thiamine import ATP-binding protein ThiQ from Salmonella choleraesuis (strain SC-B67).